We begin with the raw amino-acid sequence, 500 residues long: Serine carboxypeptidase 3 (500 aa).

The N-terminal stretch at 1 to 21 (MATARVSLILLVVVLAASACA) is a signal peptide. The propeptide occupies 22–73 (EGLRLPRDAKFPAAQAERLIRSLNLLPKEAGPTGAGDVPSVAPGELLERRVT). 3 disulfide bridges follow: Cys-126/Cys-366, Cys-294/Cys-309, and Cys-332/Cys-337. Residue Asn-144 is glycosylated (N-linked (GlcNAc...) asparagine). Ser-216 is a catalytic residue. Asp-404 is an active-site residue. Cys-407 provides a ligand contact to substrate. His-461 is a catalytic residue. Residues 485–500 (EEWLAELPEQPMYAAM) constitute a propeptide that is removed on maturation.

This sequence belongs to the peptidase S10 family. As to quaternary structure, monomer.

The enzyme catalyses Release of a C-terminal amino acid with broad specificity.. In Oryza sativa subsp. japonica (Rice), this protein is Serine carboxypeptidase 3 (CBP3).